Consider the following 1450-residue polypeptide: Auxilin-like protein 1 (1450 aa).

Disordered stretches follow at residues 117–142 (NEDKKRNRRKGGNSSDVPLCNEGKKS), 241–318 (STRD…AESS), 357–383 (DSKIENKGNTKVEGITEESRDNNSQIL), 459–480 (NSKQQEPENLAPAKPEPDTKQE), 512–541 (SQKDEKQFTEKENSTVTQMVQDEESDSQEM), 556–575 (EETPQQTESKSEMNIEEKSE), 908–946 (DRSETDSNNSRERFDQTQEQAEETMIDGSIDTDTSRSSF), 961–1046 (EQHR…ELEH), 1077–1168 (GAAT…ERKQ), 1192–1241 (AGKT…AERA), and 1254–1328 (AMEK…SDRA). Residues 316-344 (ESSAALKKAIEEAQIRMNIAKQMMEKKKS) are a coiled coil. Residues 357–366 (DSKIENKGNT) show a composition bias toward basic and acidic residues. 7 stretches are compositionally biased toward basic and acidic residues: residues 512–524 (SQKDEKQFTEKEN), 564–575 (SKSEMNIEEKSE), 908–923 (DRSETDSNNSRERFDQ), 1037–1046 (RNGDKKELEH), 1117–1131 (NMKENEGEESCRSSM), 1147–1168 (ETVEEHLKKIDETREKERERKQ), and 1192–1226 (AGKTAMEKAKAVAHRREVPRKSEKGSVEVNDKLSS). 2 coiled-coil regions span residues 1142-1184 (SQNK…RERA) and 1219-1257 (EVNDKLSSAEKASMQAKLRAERAAVERAITEVRERAMEK). Low complexity predominate over residues 1270–1299 (SYGGSKSFSSSGERRGSSSSGTENKSSGPS). The segment covering 1310–1328 (PIQRCKARSERHQRTSDRA) has biased composition (basic and acidic residues). A coiled-coil region spans residues 1327-1355 (RAAEALAEKKLRDLKTQKEQTERNRLAEA). The region spanning 1377–1450 (TLQYILGAES…AWNKFGADER (74 aa)) is the J domain.

This is Auxilin-like protein 1 (AUL1) from Arabidopsis thaliana (Mouse-ear cress).